Here is a 250-residue protein sequence, read N- to C-terminus: MAVTKLVLVRHGESQWNNENRFTGWYDVDLSDKGRSEAKAAGQLLKDEGFAFDFAYTSVLKRAIHTLWNVLDELDQAWLPVEKSWKLNERHYGALQGLNKAETAEKYGDEQVKQWRRGFAITPPELTRDDERFPGHDPRYASLSDKELPLTESLALTIERVVPYWNETILPRIKSGERVIIAAHGNSLRALVKYLDNMGEDEILELNIPTGVPLVYEFDENFKPIKRYYLGNADEIAAKAAAVANQGKAK.

Residues arginine 10 to asparagine 17, threonine 23 to glycine 24, arginine 62, glutamate 89 to tyrosine 92, lysine 100, arginine 116 to arginine 117, and glycine 185 to asparagine 186 each bind substrate. Histidine 11 serves as the catalytic Tele-phosphohistidine intermediate. Glutamate 89 functions as the Proton donor/acceptor in the catalytic mechanism.

The protein belongs to the phosphoglycerate mutase family. BPG-dependent PGAM subfamily. As to quaternary structure, homodimer.

The catalysed reaction is (2R)-2-phosphoglycerate = (2R)-3-phosphoglycerate. The protein operates within carbohydrate degradation; glycolysis; pyruvate from D-glyceraldehyde 3-phosphate: step 3/5. Its function is as follows. Catalyzes the interconversion of 2-phosphoglycerate and 3-phosphoglycerate. The chain is 2,3-bisphosphoglycerate-dependent phosphoglycerate mutase from Pectobacterium carotovorum subsp. carotovorum (strain PC1).